Reading from the N-terminus, the 140-residue chain is Nucleoside diphosphate kinase (140 aa).

The ATP site is built by K11, F59, R87, T93, R104, and N114. H117 serves as the catalytic Pros-phosphohistidine intermediate.

This sequence belongs to the NDK family. As to quaternary structure, homotetramer. The cofactor is Mg(2+).

It is found in the cytoplasm. It carries out the reaction a 2'-deoxyribonucleoside 5'-diphosphate + ATP = a 2'-deoxyribonucleoside 5'-triphosphate + ADP. The catalysed reaction is a ribonucleoside 5'-diphosphate + ATP = a ribonucleoside 5'-triphosphate + ADP. In terms of biological role, major role in the synthesis of nucleoside triphosphates other than ATP. The ATP gamma phosphate is transferred to the NDP beta phosphate via a ping-pong mechanism, using a phosphorylated active-site intermediate. This chain is Nucleoside diphosphate kinase, found in Xanthobacter autotrophicus (strain ATCC BAA-1158 / Py2).